The sequence spans 463 residues: MDKKHILCFLVLLPLNMALISAESEEGVNQTDLGVTRNKIMTAQYECYQKIMQDPIQQAEGLYCNRTWDGWLCWNDVAAGTESMQYCPDYFQDFDPSEKVTKICDQDGHWFRHPDSNRTWTNYTLCNNSTHEKVKTALNLFYLTIIGHGLSIASLIISLIIFFYFKSLSCQRITLHKNLFFSFICNSIVTIIHLTAVANNQALVATNPVSCKVSQFIHLYLMGCNYFWMLCEGVYLHTLIVVAVFAEKQHLMWYYFLGWGFPLLPACIHAIARSLYYNDNCWISSDTHLLYIIHGPICAALLVNLFFLLNIVRVLITKLKVTHQVESNLYMKAVRATLILVPLLGIEFVLFPWRPEGKVAEEVYDYVMHILMHFQGLLVATIFCFFNGEVQAILRRNWNQYKIQFGNGFSHSDALRSASYTVSTISDMQGYSHDCPTEHLNGKSIQDIENVALKSENMYDLVM.

An N-terminal signal peptide occupies residues 1 to 22 (MDKKHILCFLVLLPLNMALISA). Residues 23–138 (ESEEGVNQTD…STHEKVKTAL (116 aa)) lie on the Extracellular side of the membrane. N-linked (GlcNAc...) asparagine glycans are attached at residues N29, N65, N117, N122, N127, and N128. 3 cysteine pairs are disulfide-bonded: C47-C73, C64-C104, and C87-C126. Residues 139–163 (NLFYLTIIGHGLSIASLIISLIIFF) form a helical membrane-spanning segment. Residues 164–174 (YFKSLSCQRIT) are Cytoplasmic-facing. Residues 175-197 (LHKNLFFSFICNSIVTIIHLTAV) form a helical membrane-spanning segment. The Extracellular portion of the chain corresponds to 198–208 (ANNQALVATNP). The chain crosses the membrane as a helical span at residues 209–237 (VSCKVSQFIHLYLMGCNYFWMLCEGVYLH). At 238–251 (TLIVVAVFAEKQHL) the chain is on the cytoplasmic side. Residues 252–272 (MWYYFLGWGFPLLPACIHAIA) form a helical membrane-spanning segment. The Extracellular portion of the chain corresponds to 273–288 (RSLYYNDNCWISSDTH). Residues 287 to 288 (TH) are required for RAMP3 interaction. Residues 289-313 (LLYIIHGPICAALLVNLFFLLNIVR) form a helical membrane-spanning segment. The Cytoplasmic segment spans residues 314–328 (VLITKLKVTHQVESN). Residues 329–350 (LYMKAVRATLILVPLLGIEFVL) traverse the membrane as a helical segment. The Extracellular segment spans residues 351 to 365 (FPWRPEGKVAEEVYD). A helical transmembrane segment spans residues 366–386 (YVMHILMHFQGLLVATIFCFF). The Cytoplasmic segment spans residues 387 to 463 (NGEVQAILRR…KSENMYDLVM (77 aa)). A phosphoserine mark is found at S419 and S444.

Belongs to the G-protein coupled receptor 2 family. Heterodimer of CALCRL and RAMP1; the receptor complex functions as CGRP receptor. Heterodimer of CALCRL and RAMP2 or CALCRL and RAMP3; the complexes function as adrenomedullin receptor. As to expression, expressed predominantly in the lung, thymus, heart and brain.

The protein resides in the cell membrane. In terms of biological role, g protein-coupled receptor which specificity is determined by its interaction with receptor-activity-modifying proteins (RAMPs). Together with RAMP1, form the receptor complex for calcitonin-gene-related peptides CALCA/CGRP1 and CALCB/CGRP2. Together with RAMP2 or RAMP3, function as receptor complexes for adrenomedullin (ADM and ADM2). Ligand binding causes a conformation change that triggers signaling via guanine nucleotide-binding proteins (G proteins) and modulates the activity of downstream effectors. Activates cAMP-dependent pathway. This is Calcitonin gene-related peptide type 1 receptor from Mus musculus (Mouse).